A 130-amino-acid chain; its full sequence is Hydrogenase maturation factor HypA (130 aa).

His-2 provides a ligand contact to Ni(2+). Residues Cys-74, Cys-77, Cys-90, and Cys-93 each coordinate Zn(2+).

This sequence belongs to the HypA/HybF family.

Functionally, involved in the maturation of [NiFe] hydrogenases. Required for nickel insertion into the metal center of the hydrogenase. The polypeptide is Hydrogenase maturation factor HypA (Desulfatibacillum aliphaticivorans).